The sequence spans 908 residues: Probable disease resistance RPP8-like protein 4 (908 aa).

Residues 15 to 57 are a coiled coil; sequence DLLSRESERLQGIDEQLDGLKRQLRSLQSLLKDADAKKHGSDR. Residues 146 to 459 enclose the NB-ARC domain; it reads RQRVQREIRQ…AEGIYDGSTI (314 aa). 192-199 is an ATP binding site; that stretch reads GMGGIGKT. 3 LRR repeats span residues 575 to 599, 600 to 623, and 842 to 867; these read LTLLRVLDLSRVKFEGGKLPSSIGG, LIHLRYLSLYGAVVSHLPSTMRNL, and MPCLRTLTIHDCEKLKELPDGLKYIT.

The protein belongs to the disease resistance NB-LRR family. RPP8/HRT subfamily.

Functionally, potential disease resistance protein. This chain is Probable disease resistance RPP8-like protein 4 (RPP8L4), found in Arabidopsis thaliana (Mouse-ear cress).